The primary structure comprises 4513 residues: Dynein-1-beta heavy chain, flagellar inner arm I1 complex (4513 aa).

The segment at 1–1806 (MEPGDEGKGH…IVKQVLSVFY (1806 aa)) is stem. Coiled-coil stretches lie at residues 192–223 (KAAA…NQQD), 1544–1577 (TAQG…RQQF), and 1704–1727 (THEC…LKKK). AAA stretches follow at residues 1807-2028 (YGYE…PIAR), 2089-2350 (RAIE…VPEN), 2458-2706 (FKPA…IIQG), and 2808-3059 (DYAL…LKRR). ATP-binding positions include 1845–1852 (GPAGTGKT), 2127–2134 (GRTGSGKS), 2497–2504 (GNVGVGKT), and 2848–2855 (GVGGSGRK). 3 coiled-coil regions span residues 3107 to 3193 (AAMK…LTKK), 3301 to 3384 (KRAK…SISE), and 3499 to 3519 (RLKV…NAIQ). The tract at residues 3107–3384 (AAMKKVAEEK…RVRWEASISE (278 aa)) is stalk. AAA regions lie at residues 3443 to 3674 (LANP…EVNA) and 3890 to 4109 (ATTY…LLKS).

The I1 inner arm complex (also known as the f dynein complex) is a two-headed isoform composed of two heavy chains (1-alpha and 1-beta), three intermediate chains and three light chains. I1 occupies a specific position proximal to the first radial spoke and repeats every 96 nm along the length of the axoneme.

The protein localises to the cell projection. Its subcellular location is the cilium. It localises to the flagellum. The protein resides in the cytoplasm. It is found in the cytoskeleton. The protein localises to the flagellum axoneme. Functionally, force generating protein of eukaryotic cilia and flagella. Produces force towards the minus ends of microtubules. Dynein has ATPase activity; the force-producing power stroke is thought to occur on release of ADP. Required for assembly of the I1 inner arm complex and its targeting to the appropriate axoneme location. Also required for phototaxis. The protein is Dynein-1-beta heavy chain, flagellar inner arm I1 complex (DHC10) of Chlamydomonas reinhardtii (Chlamydomonas smithii).